Reading from the N-terminus, the 920-residue chain is Phosphoenolpyruvate carboxylase (920 aa).

Residues His138 and Lys583 contribute to the active site.

This sequence belongs to the PEPCase type 1 family. Mg(2+) serves as cofactor.

The enzyme catalyses oxaloacetate + phosphate = phosphoenolpyruvate + hydrogencarbonate. Its function is as follows. Forms oxaloacetate, a four-carbon dicarboxylic acid source for the tricarboxylic acid cycle. In Streptococcus pyogenes serotype M1, this protein is Phosphoenolpyruvate carboxylase.